Here is a 260-residue protein sequence, read N- to C-terminus: Triosephosphate isomerase (260 aa).

Asn11–Lys13 lines the substrate pocket. Catalysis depends on His103, which acts as the Electrophile. Catalysis depends on Glu175, which acts as the Proton acceptor. Residues Gly181, Ser220, and Gly241–Gly242 contribute to the substrate site.

Belongs to the triosephosphate isomerase family. Homodimer.

It is found in the cytoplasm. It catalyses the reaction D-glyceraldehyde 3-phosphate = dihydroxyacetone phosphate. It functions in the pathway carbohydrate biosynthesis; gluconeogenesis. The protein operates within carbohydrate degradation; glycolysis; D-glyceraldehyde 3-phosphate from glycerone phosphate: step 1/1. Functionally, involved in the gluconeogenesis. Catalyzes stereospecifically the conversion of dihydroxyacetone phosphate (DHAP) to D-glyceraldehyde-3-phosphate (G3P). This is Triosephosphate isomerase from Shewanella pealeana (strain ATCC 700345 / ANG-SQ1).